We begin with the raw amino-acid sequence, 380 residues long: Alanine racemase (380 aa).

Residue K34 is the Proton acceptor; specific for D-alanine of the active site. K34 carries the post-translational modification N6-(pyridoxal phosphate)lysine. R135 is a substrate binding site. Y267 serves as the catalytic Proton acceptor; specific for L-alanine. M315 provides a ligand contact to substrate.

The protein belongs to the alanine racemase family. Pyridoxal 5'-phosphate is required as a cofactor.

The enzyme catalyses L-alanine = D-alanine. It functions in the pathway amino-acid biosynthesis; D-alanine biosynthesis; D-alanine from L-alanine: step 1/1. Catalyzes the interconversion of L-alanine and D-alanine. May also act on other amino acids. The polypeptide is Alanine racemase (alr) (Lawsonia intracellularis (strain PHE/MN1-00)).